Here is a 240-residue protein sequence, read N- to C-terminus: uncharacterized protein (240 aa).

The next 3 membrane-spanning stretches (helical) occupy residues isoleucine 12–serine 32, isoleucine 66–valine 86, and isoleucine 89–phenylalanine 109. Residues asparagine 129 and asparagine 157 are each glycosylated (N-linked (GlcNAc...) asparagine; by host).

Its subcellular location is the membrane. This is an uncharacterized protein from Acanthamoeba polyphaga mimivirus (APMV).